Consider the following 125-residue polypeptide: Small ribosomal subunit protein eS6 (125 aa).

It belongs to the eukaryotic ribosomal protein eS6 family.

The polypeptide is Small ribosomal subunit protein eS6 (Pyrococcus horikoshii (strain ATCC 700860 / DSM 12428 / JCM 9974 / NBRC 100139 / OT-3)).